The following is a 207-amino-acid chain: Large ribosomal subunit protein uL4 (207 aa).

The tract at residues 44-78 is disordered; that stretch reads MRQGTHKTKNRAEVSGGGRKPWRQKGTGRARQGSI.

The protein belongs to the universal ribosomal protein uL4 family. Part of the 50S ribosomal subunit.

Functionally, one of the primary rRNA binding proteins, this protein initially binds near the 5'-end of the 23S rRNA. It is important during the early stages of 50S assembly. It makes multiple contacts with different domains of the 23S rRNA in the assembled 50S subunit and ribosome. Its function is as follows. This protein when expressed in E.coli represses the endogenous S10 operon; this may not occur in B.stearothermophilus however. Forms part of the polypeptide exit tunnel. The sequence is that of Large ribosomal subunit protein uL4 (rplD) from Geobacillus stearothermophilus (Bacillus stearothermophilus).